Reading from the N-terminus, the 262-residue chain is Cell division protein ZapD (262 aa).

It belongs to the ZapD family. Interacts with FtsZ.

It is found in the cytoplasm. Its function is as follows. Cell division factor that enhances FtsZ-ring assembly. Directly interacts with FtsZ and promotes bundling of FtsZ protofilaments, with a reduction in FtsZ GTPase activity. The sequence is that of Cell division protein ZapD from Nitrosomonas europaea (strain ATCC 19718 / CIP 103999 / KCTC 2705 / NBRC 14298).